Reading from the N-terminus, the 135-residue chain is Ribosome-binding factor A (135 aa).

It belongs to the RbfA family. As to quaternary structure, monomer. Binds 30S ribosomal subunits, but not 50S ribosomal subunits or 70S ribosomes.

It localises to the cytoplasm. In terms of biological role, one of several proteins that assist in the late maturation steps of the functional core of the 30S ribosomal subunit. Associates with free 30S ribosomal subunits (but not with 30S subunits that are part of 70S ribosomes or polysomes). Required for efficient processing of 16S rRNA. May interact with the 5'-terminal helix region of 16S rRNA. This chain is Ribosome-binding factor A, found in Aliivibrio fischeri (strain ATCC 700601 / ES114) (Vibrio fischeri).